Here is a 322-residue protein sequence, read N- to C-terminus: Lipoyl synthase (322 aa).

A compositionally biased stretch (polar residues) spans 1–12 (MVTVLNTVNQSG). Positions 1-22 (MVTVLNTVNQSGRLRHPEKAHR) are disordered. [4Fe-4S] cluster contacts are provided by Cys-60, Cys-65, Cys-71, Cys-86, Cys-90, Cys-93, and Ser-299. Residues 72–288 (WEKKHATFMI…ETIGKTKGFL (217 aa)) form the Radical SAM core domain.

Belongs to the radical SAM superfamily. Lipoyl synthase family. [4Fe-4S] cluster is required as a cofactor.

Its subcellular location is the cytoplasm. The catalysed reaction is [[Fe-S] cluster scaffold protein carrying a second [4Fe-4S](2+) cluster] + N(6)-octanoyl-L-lysyl-[protein] + 2 oxidized [2Fe-2S]-[ferredoxin] + 2 S-adenosyl-L-methionine + 4 H(+) = [[Fe-S] cluster scaffold protein] + N(6)-[(R)-dihydrolipoyl]-L-lysyl-[protein] + 4 Fe(3+) + 2 hydrogen sulfide + 2 5'-deoxyadenosine + 2 L-methionine + 2 reduced [2Fe-2S]-[ferredoxin]. It participates in protein modification; protein lipoylation via endogenous pathway; protein N(6)-(lipoyl)lysine from octanoyl-[acyl-carrier-protein]: step 2/2. Catalyzes the radical-mediated insertion of two sulfur atoms into the C-6 and C-8 positions of the octanoyl moiety bound to the lipoyl domains of lipoate-dependent enzymes, thereby converting the octanoylated domains into lipoylated derivatives. In Brucella abortus (strain S19), this protein is Lipoyl synthase.